A 309-amino-acid chain; its full sequence is Probable lipid kinase YegS-like (309 aa).

One can recognise a DAGKc domain in the interval 1–134 (MTTPRWRLIL…IDLLRVDADG (134 aa)). ATP is bound by residues T39, 65 to 71 (GDGTLSA), and T96. Residues L219, D222, and L224 each coordinate Mg(2+). E280 acts as the Proton acceptor in catalysis.

This sequence belongs to the diacylglycerol/lipid kinase family. YegS lipid kinase subfamily. It depends on Mg(2+) as a cofactor. Requires Ca(2+) as cofactor.

It localises to the cytoplasm. Functionally, probably phosphorylates lipids; the in vivo substrate is unknown. The polypeptide is Probable lipid kinase YegS-like (Stenotrophomonas maltophilia (strain K279a)).